A 341-amino-acid polypeptide reads, in one-letter code: Small ribosomal subunit biogenesis GTPase RsgA (341 aa).

Residues 112-268 form the CP-type G domain; that stretch reads RQQLIAANLD…LIDTPGMREL (157 aa). GTP-binding positions include 157–160 and 210–218; these read TKVD and GSSGAGKST. Residues Cys-290, Cys-295, His-297, and Cys-303 each contribute to the Zn(2+) site.

It belongs to the TRAFAC class YlqF/YawG GTPase family. RsgA subfamily. As to quaternary structure, monomer. Associates with 30S ribosomal subunit, binds 16S rRNA. The cofactor is Zn(2+).

The protein resides in the cytoplasm. In terms of biological role, one of several proteins that assist in the late maturation steps of the functional core of the 30S ribosomal subunit. Helps release RbfA from mature subunits. May play a role in the assembly of ribosomal proteins into the subunit. Circularly permuted GTPase that catalyzes slow GTP hydrolysis, GTPase activity is stimulated by the 30S ribosomal subunit. This is Small ribosomal subunit biogenesis GTPase RsgA from Xylella fastidiosa (strain 9a5c).